The following is a 250-amino-acid chain: Probable transcriptional regulatory protein SYNAS_07390 (250 aa).

Belongs to the TACO1 family.

It is found in the cytoplasm. In Syntrophus aciditrophicus (strain SB), this protein is Probable transcriptional regulatory protein SYNAS_07390.